We begin with the raw amino-acid sequence, 240 residues long: Lectin (240 aa).

Mn(2+) is bound by residues E127 and D129. Residues D129, Y131, N133, and D138 each contribute to the Ca(2+) site. D138 and H143 together coordinate Mn(2+).

The protein belongs to the leguminous lectin family. In terms of assembly, heterotetramer of two alpha and two beta chains; disulfide bond linked.

Binds preferentially to oligosaccharides bearing the sequence Man-alpha-1-&gt;2 Man-alpha-1-&gt;6 Man-alpha-1-&gt;6Man found in early steps of glycoprotein processing in the endoplasmic reticulum. It binds weakly to highly processed oligosaccharide structures. The protein is Lectin of Leucomphalos mildbraedii (Bowringia mildbraedii).